Consider the following 267-residue polypeptide: Lyso-ornithine lipid O-acyltransferase (267 aa).

A helical transmembrane segment spans residues 7-27 (IFLVVAAMVALSLSLIPFQYL).

This sequence belongs to the 1-acyl-sn-glycerol-3-phosphate acyltransferase family. OlsA subfamily.

It localises to the membrane. The enzyme catalyses a lyso-ornithine lipid + a fatty acyl-[ACP] = an N(2)-[(3R)-3-(acyloxy)acyl]-L-ornithine lipid + holo-[ACP]. It functions in the pathway lipid metabolism. Catalyzes the second step in the formation of ornithine lipids, which are phosphorus-free membrane lipids. Uses acyl-acyl carrier protein (acyl-AcpP) as an acyl donor and converts lyso-ornithine lipid (LOL) into ornithine lipid (OL). This is Lyso-ornithine lipid O-acyltransferase from Brucella abortus (strain 2308).